Consider the following 526-residue polypeptide: Phosphoenolpyruvate carboxylase (526 aa).

This sequence belongs to the PEPCase type 2 family. Homotetramer. Mg(2+) is required as a cofactor.

The enzyme catalyses oxaloacetate + phosphate = phosphoenolpyruvate + hydrogencarbonate. Catalyzes the irreversible beta-carboxylation of phosphoenolpyruvate (PEP) to form oxaloacetate (OAA), a four-carbon dicarboxylic acid source for the tricarboxylic acid cycle. This chain is Phosphoenolpyruvate carboxylase, found in Methanosarcina mazei (strain ATCC BAA-159 / DSM 3647 / Goe1 / Go1 / JCM 11833 / OCM 88) (Methanosarcina frisia).